The chain runs to 534 residues: Bifunctional purine biosynthesis protein PurH (534 aa).

One can recognise an MGS-like domain in the interval 1 to 148; the sequence is MNTVRPIRRA…KNHQDVTIVV (148 aa).

The protein belongs to the PurH family.

The catalysed reaction is (6R)-10-formyltetrahydrofolate + 5-amino-1-(5-phospho-beta-D-ribosyl)imidazole-4-carboxamide = 5-formamido-1-(5-phospho-D-ribosyl)imidazole-4-carboxamide + (6S)-5,6,7,8-tetrahydrofolate. It catalyses the reaction IMP + H2O = 5-formamido-1-(5-phospho-D-ribosyl)imidazole-4-carboxamide. It participates in purine metabolism; IMP biosynthesis via de novo pathway; 5-formamido-1-(5-phospho-D-ribosyl)imidazole-4-carboxamide from 5-amino-1-(5-phospho-D-ribosyl)imidazole-4-carboxamide (10-formyl THF route): step 1/1. Its pathway is purine metabolism; IMP biosynthesis via de novo pathway; IMP from 5-formamido-1-(5-phospho-D-ribosyl)imidazole-4-carboxamide: step 1/1. The sequence is that of Bifunctional purine biosynthesis protein PurH from Shewanella denitrificans (strain OS217 / ATCC BAA-1090 / DSM 15013).